The chain runs to 109 residues: Parvalbumin beta (109 aa).

An N-acetylalanine modification is found at Ala2. The tract at residues 22 to 41 (AGSFDHKKFFKACGLSGKST) is igE-binding. EF-hand domains follow at residues 39 to 74 (KSTD…FKAG) and 78 to 109 (LSDA…MIKG). Ca(2+) is bound by residues Asp52, Asp54, Ser56, Phe58, Glu60, Glu63, Asp91, Asp93, Asp95, Lys97, and Glu102.

It belongs to the parvalbumin family. The N-terminus is blocked. In terms of tissue distribution, expressed in both white and dark muscles (at protein level). About eight and a half times lower expression in the dark muscle than in the white muscle (at protein level).

In muscle, parvalbumin is thought to be involved in relaxation after contraction. It binds two calcium ions. This chain is Parvalbumin beta, found in Scomber japonicus (Chub mackerel).